The chain runs to 179 residues: Large ribosomal subunit protein uL5 (179 aa).

The protein belongs to the universal ribosomal protein uL5 family. As to quaternary structure, part of the 50S ribosomal subunit; part of the 5S rRNA/L5/L18/L25 subcomplex. Contacts the 5S rRNA and the P site tRNA. Forms a bridge to the 30S subunit in the 70S ribosome.

Functionally, this is one of the proteins that bind and probably mediate the attachment of the 5S RNA into the large ribosomal subunit, where it forms part of the central protuberance. In the 70S ribosome it contacts protein S13 of the 30S subunit (bridge B1b), connecting the 2 subunits; this bridge is implicated in subunit movement. Contacts the P site tRNA; the 5S rRNA and some of its associated proteins might help stabilize positioning of ribosome-bound tRNAs. This Tolumonas auensis (strain DSM 9187 / NBRC 110442 / TA 4) protein is Large ribosomal subunit protein uL5.